The sequence spans 194 residues: Pyridoxal 5'-phosphate synthase subunit PdxT (194 aa).

L-glutamine is bound at residue 50–52 (GES). Cys82 (nucleophile) is an active-site residue. L-glutamine-binding positions include Arg109 and 136-137 (IR). Active-site charge relay system residues include His172 and Glu174.

The protein belongs to the glutaminase PdxT/SNO family. As to quaternary structure, in the presence of PdxS, forms a dodecamer of heterodimers. Only shows activity in the heterodimer.

It carries out the reaction aldehydo-D-ribose 5-phosphate + D-glyceraldehyde 3-phosphate + L-glutamine = pyridoxal 5'-phosphate + L-glutamate + phosphate + 3 H2O + H(+). The catalysed reaction is L-glutamine + H2O = L-glutamate + NH4(+). It functions in the pathway cofactor biosynthesis; pyridoxal 5'-phosphate biosynthesis. In terms of biological role, catalyzes the hydrolysis of glutamine to glutamate and ammonia as part of the biosynthesis of pyridoxal 5'-phosphate. The resulting ammonia molecule is channeled to the active site of PdxS. This Streptococcus pneumoniae (strain CGSP14) protein is Pyridoxal 5'-phosphate synthase subunit PdxT.